We begin with the raw amino-acid sequence, 248 residues long: Probable transcriptional regulatory protein BRADO1143 (248 aa).

Belongs to the TACO1 family.

The protein localises to the cytoplasm. This is Probable transcriptional regulatory protein BRADO1143 from Bradyrhizobium sp. (strain ORS 278).